The chain runs to 367 residues: Alanine racemase (367 aa).

The active-site Proton acceptor; specific for D-alanine is lysine 40. Lysine 40 is modified (N6-(pyridoxal phosphate)lysine). Arginine 136 serves as a coordination point for substrate. Tyrosine 263 acts as the Proton acceptor; specific for L-alanine in catalysis. Methionine 310 contributes to the substrate binding site.

This sequence belongs to the alanine racemase family. Requires pyridoxal 5'-phosphate as cofactor.

The catalysed reaction is L-alanine = D-alanine. It functions in the pathway amino-acid biosynthesis; D-alanine biosynthesis; D-alanine from L-alanine: step 1/1. In terms of biological role, catalyzes the interconversion of L-alanine and D-alanine. May also act on other amino acids. The sequence is that of Alanine racemase (alr) from Lactococcus lactis subsp. cremoris (strain SK11).